The chain runs to 596 residues: Aspartate--tRNA(Asp/Asn) ligase (596 aa).

L-aspartate is bound at residue glutamate 173. An aspartate region spans residues 197–200 (QLFK). Arginine 219 is a binding site for L-aspartate. Residues 219–221 (RDE) and glutamine 228 each bind ATP. Histidine 450 contacts L-aspartate. Glutamate 485 provides a ligand contact to ATP. An L-aspartate-binding site is contributed by arginine 492. 537 to 540 (GLDR) provides a ligand contact to ATP.

The protein belongs to the class-II aminoacyl-tRNA synthetase family. Type 1 subfamily. In terms of assembly, homodimer.

The protein resides in the cytoplasm. The catalysed reaction is tRNA(Asx) + L-aspartate + ATP = L-aspartyl-tRNA(Asx) + AMP + diphosphate. Its function is as follows. Aspartyl-tRNA synthetase with relaxed tRNA specificity since it is able to aspartylate not only its cognate tRNA(Asp) but also tRNA(Asn). Reaction proceeds in two steps: L-aspartate is first activated by ATP to form Asp-AMP and then transferred to the acceptor end of tRNA(Asp/Asn). The polypeptide is Aspartate--tRNA(Asp/Asn) ligase (Hydrogenovibrio crunogenus (strain DSM 25203 / XCL-2) (Thiomicrospira crunogena)).